We begin with the raw amino-acid sequence, 802 residues long: Protein enabled homolog (802 aa).

A WH1 domain is found at 1–111; the sequence is MSEQSICQAR…SAMMHALEVL (111 aa). The span at 143 to 155 shows a compositional bias: polar residues; the sequence is NSQLPAQVQNGPS. The segment at 143-166 is disordered; sequence NSQLPAQVQNGPSQEELEIQRRQL. Serine 144 carries the phosphoserine modification. Positions 154 to 258 form a coiled coil; sequence PSQEELEIQR…ERERRMSNAA (105 aa). Repeat copies occupy residues 175–179, 180–184, 185–189, 190–194, 195–199, 200–204, and 205–209. The tract at residues 175–209 is 7 X 5 AA tandem repeats of [LM]-E-[QR]-[EQ]-[QR]; it reads LERERMERERLERERLERERLERERLEQEQLERQR. The span at 245–254 shows a compositional bias: basic and acidic residues; sequence QVEWERERRM. Disordered stretches follow at residues 245–287 and 341–622; these read QVEW…PSYA and ATVP…RPLT. Residue serine 255 is modified to Phosphoserine; by PKA. A compositionally biased stretch (low complexity) spans 255 to 278; that stretch reads SNAAPSSDSSLSSAPLPEYSSCQP. Residues 348 to 361 show a composition bias toward polar residues; that stretch reads NKNSRPSSPVNTPS. Serine 383 is subject to Phosphoserine. The segment covering 386 to 410 has biased composition (low complexity); that stretch reads IMISSPPGKATGPRPVLPVCVSSPV. Residues 431 to 464 show a composition bias toward pro residues; it reads VSPPPTSGPAAPPPPPPPPPPPPPPPLPPPPLPP. Positions 485–505 are enriched in low complexity; that stretch reads STPSSKPSVLPSPSAGAPASA. Residues 525–535 are compositionally biased toward polar residues; sequence AASQPAESPTP. Pro residues predominate over residues 542–553; sequence PPAPPPPPPLPS. Tyrosine 557 is subject to Phosphotyrosine. A compositionally biased stretch (pro residues) spans 561–605; the sequence is LPPPPGPPPPPPLPSTGPPPPPPPPPPLPNQAPPPPPPPPAPPLP. The EVH2 block A stretch occupies residues 623-643; it reads GLAAAIAGAKLRKVSRVEDGS. Residues 623–799 are EVH2; that stretch reads GLAAAIAGAK…DAIRQELSKS (177 aa). The KLKR signature appears at 632 to 635; the sequence is KLRK. 2 disordered regions span residues 639–675 and 691–764; these read VEDG…GGSG and AEKG…TEGL. The segment covering 664–675 has biased composition (gly residues); the sequence is RGNGPLPLGGSG. An EVH2 block B region spans residues 674 to 691; that stretch reads SGLMEEMSALLARRRRIA. Polar residues predominate over residues 731-760; the sequence is RTNTMNGSKSPVISRPKSTPSSQPSANGVQ. A phosphoserine mark is found at serine 738 and serine 740. Positions 765 to 799 are EVH2 block C; it reads DYDRLKQDILDEMRKELAKLKEELIDAIRQELSKS. The stretch at 767 to 797 forms a coiled coil; that stretch reads DRLKQDILDEMRKELAKLKEELIDAIRQELS.

Belongs to the Ena/VASP family. In terms of assembly, homotetramer. Interacts with APBB1IP, APBB1, PFN1 and ROBO4. Isoforms, containing the polyproline-rich regions with PPLP motifs, bind the WW domain of APBB1IP. Isoforms, containing the PPSY motif, bind, in vitro, to the WW2 and WW3 domains of NEDD4 and to the WW1 domain of YAP1. Binds the SH3 domain of BAIAP2-alpha but only after the autoinhibitory region of BAIAP2-alpha has been blocked by interaction with CDC42. Interacts, via the EVH1/WH1 domain, with the Pro-rich domains from VCL, ZYX and Listeria monocytogenes actA and with TES (via LIM domain). The TES LIM domain and the Pro-rich domains from VCL or ZYX compete for the same binding site. Interaction with ZYX is important for targeting ENAH to focal adhesions and enhances production of actin-rich structures at the apical surface of cells. Binds GPHN. Heterotrimer with TES and ACTL7A. Interacts with FAT1 (via EVH1 domains). Interacts, through the Pro-rich region, with the C-terminal SH3 domain of DNMPB. Interacts with PRPF40A. Post-translationally, NTN1-induced PKA phosphorylation on Ser-255 directly parallels the formation of filopodial protrusions. In terms of tissue distribution, expressed in heart and testis, lower levels in lung, skeletal muscle, kidney, pancreas and brain. Isoform 5 is expressed exclusively in the brain. Isoform 2 is expressed predominantly in brain, testis, ovary and fat. In the brain, isoforms 2 and 5 are expressed at highest levels in the hippocampus, cortex and midbrain, and at lowest levels in the striatum and cerebellum. Isoform 6 is expressed in brain and spleen.

It localises to the cytoplasm. The protein resides in the cytoskeleton. Its subcellular location is the cell projection. The protein localises to the lamellipodium. It is found in the filopodium. It localises to the synapse. The protein resides in the cell junction. Its subcellular location is the focal adhesion. Ena/VASP proteins are actin-associated proteins involved in a range of processes dependent on cytoskeleton remodeling and cell polarity such as axon guidance and lamellipodial and filopodial dynamics in migrating cells. ENAH induces the formation of F-actin rich outgrowths in fibroblasts. Acts synergistically with BAIAP2-alpha and downstream of NTN1 to promote filipodia formation. The polypeptide is Protein enabled homolog (Enah) (Mus musculus (Mouse)).